Here is a 209-residue protein sequence, read N- to C-terminus: Ion-translocating oxidoreductase complex subunit G (209 aa).

Residues 9-29 (ATTLALFAASTTAVTAVVNML) form a helical membrane-spanning segment. T175 bears the FMN phosphoryl threonine mark.

This sequence belongs to the RnfG family. In terms of assembly, the complex is composed of six subunits: RnfA, RnfB, RnfC, RnfD, RnfE and RnfG. Requires FMN as cofactor.

It is found in the cell inner membrane. Its function is as follows. Part of a membrane-bound complex that couples electron transfer with translocation of ions across the membrane. This chain is Ion-translocating oxidoreductase complex subunit G, found in Pectobacterium atrosepticum (strain SCRI 1043 / ATCC BAA-672) (Erwinia carotovora subsp. atroseptica).